Reading from the N-terminus, the 95-residue chain is Aspartyl/glutamyl-tRNA(Asn/Gln) amidotransferase subunit C (95 aa).

The protein belongs to the GatC family. Heterotrimer of A, B and C subunits.

The enzyme catalyses L-glutamyl-tRNA(Gln) + L-glutamine + ATP + H2O = L-glutaminyl-tRNA(Gln) + L-glutamate + ADP + phosphate + H(+). It carries out the reaction L-aspartyl-tRNA(Asn) + L-glutamine + ATP + H2O = L-asparaginyl-tRNA(Asn) + L-glutamate + ADP + phosphate + 2 H(+). In terms of biological role, allows the formation of correctly charged Asn-tRNA(Asn) or Gln-tRNA(Gln) through the transamidation of misacylated Asp-tRNA(Asn) or Glu-tRNA(Gln) in organisms which lack either or both of asparaginyl-tRNA or glutaminyl-tRNA synthetases. The reaction takes place in the presence of glutamine and ATP through an activated phospho-Asp-tRNA(Asn) or phospho-Glu-tRNA(Gln). This is Aspartyl/glutamyl-tRNA(Asn/Gln) amidotransferase subunit C from Alcanivorax borkumensis (strain ATCC 700651 / DSM 11573 / NCIMB 13689 / SK2).